Here is a 275-residue protein sequence, read N- to C-terminus: 2,3,4,5-tetrahydropyridine-2,6-dicarboxylate N-succinyltransferase (275 aa).

Residues arginine 108 and aspartate 145 each contribute to the substrate site.

It belongs to the transferase hexapeptide repeat family. As to quaternary structure, homotrimer.

Its subcellular location is the cytoplasm. It catalyses the reaction (S)-2,3,4,5-tetrahydrodipicolinate + succinyl-CoA + H2O = (S)-2-succinylamino-6-oxoheptanedioate + CoA. Its pathway is amino-acid biosynthesis; L-lysine biosynthesis via DAP pathway; LL-2,6-diaminopimelate from (S)-tetrahydrodipicolinate (succinylase route): step 1/3. The chain is 2,3,4,5-tetrahydropyridine-2,6-dicarboxylate N-succinyltransferase from Maricaulis maris (strain MCS10) (Caulobacter maris).